A 357-amino-acid chain; its full sequence is Molybdenum import ATP-binding protein ModC (357 aa).

Residues 1–233 (MRLEVEARLR…PFPTSGPGRR (233 aa)) enclose the ABC transporter domain. ATP is bound at residue 31–38 (GRSGSGKT). One can recognise a Mop domain in the interval 293–357 (GISALNVLPG…AVVKTVALDY (65 aa)).

This sequence belongs to the ABC transporter superfamily. Molybdate importer (TC 3.A.1.8) family. As to quaternary structure, the complex is composed of two ATP-binding proteins (ModC), two transmembrane proteins (ModB) and a solute-binding protein (ModA).

Its subcellular location is the cell inner membrane. It carries out the reaction molybdate(out) + ATP + H2O = molybdate(in) + ADP + phosphate + H(+). Its function is as follows. Part of the ABC transporter complex ModABC involved in molybdenum import. Responsible for energy coupling to the transport system. The chain is Molybdenum import ATP-binding protein ModC from Rhizobium meliloti (strain 1021) (Ensifer meliloti).